The sequence spans 101 residues: Small ribosomal subunit protein bS18c (101 aa).

Basic residues predominate over residues 1–19 (MDKSKRPFRKSKRSFRKRL). A disordered region spans residues 1–23 (MDKSKRPFRKSKRSFRKRLPPIG).

It belongs to the bacterial ribosomal protein bS18 family. In terms of assembly, part of the 30S ribosomal subunit.

It localises to the plastid. Its subcellular location is the chloroplast. The polypeptide is Small ribosomal subunit protein bS18c (Chloranthus spicatus (Chulantree)).